The chain runs to 72 residues: Translation initiation factor IF-1 (72 aa).

The region spanning 2–72 (AKDDVIEVEG…TRGRITYRYK (71 aa)) is the S1-like domain. At Y60 the chain carries Phosphotyrosine.

This sequence belongs to the IF-1 family. In terms of assembly, component of the 30S ribosomal translation pre-initiation complex which assembles on the 30S ribosome in the order IF-2 and IF-3, IF-1 and N-formylmethionyl-tRNA(fMet); mRNA recruitment can occur at any time during PIC assembly.

It is found in the cytoplasm. In terms of biological role, one of the essential components for the initiation of protein synthesis. Stabilizes the binding of IF-2 and IF-3 on the 30S subunit to which N-formylmethionyl-tRNA(fMet) subsequently binds. Helps modulate mRNA selection, yielding the 30S pre-initiation complex (PIC). Upon addition of the 50S ribosomal subunit IF-1, IF-2 and IF-3 are released leaving the mature 70S translation initiation complex. The chain is Translation initiation factor IF-1 from Bacillus subtilis (strain 168).